A 227-amino-acid polypeptide reads, in one-letter code: Large ribosomal subunit protein uL3 (227 aa).

An N5-methylglutamine modification is found at glutamine 154.

This sequence belongs to the universal ribosomal protein uL3 family. Part of the 50S ribosomal subunit. Forms a cluster with proteins L14 and L19. Post-translationally, methylated by PrmB.

Functionally, one of the primary rRNA binding proteins, it binds directly near the 3'-end of the 23S rRNA, where it nucleates assembly of the 50S subunit. The chain is Large ribosomal subunit protein uL3 from Acidiphilium cryptum (strain JF-5).